A 139-amino-acid chain; its full sequence is Two-component response regulator 24 (139 aa).

In terms of domain architecture, Response regulatory spans 19–134 (TALVVDDSFV…KLLSILHKLN (116 aa)). Residue aspartate 69 is modified to 4-aspartylphosphate.

This sequence belongs to the ARR family. Type-A subfamily. Two-component system major event consists of a His-to-Asp phosphorelay between a sensor histidine kinase (HK) and a response regulator (RR). In plants, the His-to-Asp phosphorelay involves an additional intermediate named Histidine-containing phosphotransfer protein (HPt). This multistep phosphorelay consists of a His-Asp-His-Asp sequential transfer of a phosphate group between first a His and an Asp of the HK protein, followed by the transfer to a conserved His of the HPt protein and finally the transfer to an Asp in the receiver domain of the RR protein. Mostly expressed in flowers and siliques, primarily restricted to pollen grains.

The protein localises to the nucleus. Functions as a response regulator involved in His-to-Asp phosphorelay signal transduction system. Phosphorylation of the Asp residue in the receiver domain activates the ability of the protein to promote the transcription of target genes. Type-A response regulators seem to act as negative regulators of the cytokinin signaling. The chain is Two-component response regulator 24 from Arabidopsis thaliana (Mouse-ear cress).